Here is a 366-residue protein sequence, read N- to C-terminus: A-type ATP synthase subunit C (366 aa).

This sequence belongs to the V-ATPase V0D/AC39 subunit family. Has multiple subunits with at least A(3), B(3), C, D, E, F, H, I and proteolipid K(x).

It localises to the cell membrane. Component of the A-type ATP synthase that produces ATP from ADP in the presence of a proton gradient across the membrane. The polypeptide is A-type ATP synthase subunit C (Thermococcus onnurineus (strain NA1)).